We begin with the raw amino-acid sequence, 185 residues long: Ribosome maturation factor RimP (185 aa).

This sequence belongs to the RimP family.

The protein resides in the cytoplasm. Required for maturation of 30S ribosomal subunits. The protein is Ribosome maturation factor RimP of Magnetococcus marinus (strain ATCC BAA-1437 / JCM 17883 / MC-1).